The chain runs to 221 residues: Protein LURP-one-related 17 (221 aa).

The interval M1–S20 is disordered.

This sequence belongs to the LOR family.

Functionally, might be related to the phospholipid scramblase and tubby-like superfamily of membrane tethered transcription factors. This chain is Protein LURP-one-related 17, found in Arabidopsis thaliana (Mouse-ear cress).